The chain runs to 320 residues: Malate dehydrogenase (320 aa).

Residues 10-15 (GSGMIG) and Asp34 contribute to the NAD(+) site. Substrate-binding residues include Arg83 and Arg89. NAD(+) is bound by residues Asn96 and 119 to 121 (ITN). Substrate is bound by residues Asn121 and Arg152. Catalysis depends on His176, which acts as the Proton acceptor.

The protein belongs to the LDH/MDH superfamily. MDH type 3 family.

It catalyses the reaction (S)-malate + NAD(+) = oxaloacetate + NADH + H(+). Catalyzes the reversible oxidation of malate to oxaloacetate. The protein is Malate dehydrogenase of Bartonella tribocorum (strain CIP 105476 / IBS 506).